A 556-amino-acid chain; its full sequence is 2-succinyl-5-enolpyruvyl-6-hydroxy-3-cyclohexene-1-carboxylate synthase (556 aa).

Belongs to the TPP enzyme family. MenD subfamily. Homodimer. The cofactor is Mg(2+). Mn(2+) is required as a cofactor. Thiamine diphosphate serves as cofactor.

The catalysed reaction is isochorismate + 2-oxoglutarate + H(+) = 5-enolpyruvoyl-6-hydroxy-2-succinyl-cyclohex-3-ene-1-carboxylate + CO2. The protein operates within quinol/quinone metabolism; 1,4-dihydroxy-2-naphthoate biosynthesis; 1,4-dihydroxy-2-naphthoate from chorismate: step 2/7. Its pathway is quinol/quinone metabolism; menaquinone biosynthesis. Its function is as follows. Catalyzes the thiamine diphosphate-dependent decarboxylation of 2-oxoglutarate and the subsequent addition of the resulting succinic semialdehyde-thiamine pyrophosphate anion to isochorismate to yield 2-succinyl-5-enolpyruvyl-6-hydroxy-3-cyclohexene-1-carboxylate (SEPHCHC). In Escherichia coli (strain UTI89 / UPEC), this protein is 2-succinyl-5-enolpyruvyl-6-hydroxy-3-cyclohexene-1-carboxylate synthase.